A 437-amino-acid polypeptide reads, in one-letter code: Sorting nexin-30 (437 aa).

The disordered stretch occupies residues 1–45; sequence MAGGPPKALPSTGPQSLRDMPHPLAGSSSEEAVGGDSTPSPDLLM. Thr38 is subject to Phosphothreonine. A Phosphoserine modification is found at Ser40. Positions 89-210 constitute a PX domain; that stretch reads RDLFVTVDDP…VFLTAKDLNA (122 aa). Residues Arg132, Gln134, Lys162, and Arg176 each contribute to the a 1,2-diacyl-sn-glycero-3-phospho-(1D-myo-inositol-3-phosphate) site. The BAR domain maps to 234–437; that stretch reads KLRSRPLEFA…PLLQEKQETK (204 aa).

It belongs to the sorting nexin family. As to quaternary structure, heterodimer; heterodimerizes with SNX4.

The protein localises to the early endosome membrane. In terms of biological role, involved in the regulation of endocytosis and in several stages of intracellular trafficking. Together with SNX4, involved in autophagosome assembly. This is Sorting nexin-30 from Mus musculus (Mouse).